We begin with the raw amino-acid sequence, 311 residues long: tRNA-cytidine(32) 2-sulfurtransferase (311 aa).

The PP-loop motif signature appears at 47–52 (SGGKDS). Residues Cys-122, Cys-125, and Cys-213 each contribute to the [4Fe-4S] cluster site.

Belongs to the TtcA family. Homodimer. Mg(2+) is required as a cofactor. [4Fe-4S] cluster serves as cofactor.

The protein resides in the cytoplasm. The enzyme catalyses cytidine(32) in tRNA + S-sulfanyl-L-cysteinyl-[cysteine desulfurase] + AH2 + ATP = 2-thiocytidine(32) in tRNA + L-cysteinyl-[cysteine desulfurase] + A + AMP + diphosphate + H(+). The protein operates within tRNA modification. Its function is as follows. Catalyzes the ATP-dependent 2-thiolation of cytidine in position 32 of tRNA, to form 2-thiocytidine (s(2)C32). The sulfur atoms are provided by the cysteine/cysteine desulfurase (IscS) system. This is tRNA-cytidine(32) 2-sulfurtransferase from Escherichia coli O1:K1 / APEC.